A 621-amino-acid chain; its full sequence is Pre-mRNA-processing protein 45 (621 aa).

Disordered regions lie at residues 1-73 (MSAT…YANG), 137-164 (SQRTDIKEKDRNSGFERPSHEEVMSNTE), 220-251 (AQRDPLEPPRHRFKKTAAGPPSPPPPVLRSPP), 347-438 (RARE…ELRM), and 542-621 (GKND…EHDS). A compositionally biased stretch (low complexity) spans 36–51 (PSTSSSSSALVSTSSP). Composition is skewed to basic and acidic residues over residues 140–164 (TDIKEKDRNSGFERPSHEEVMSNTE) and 220–229 (AQRDPLEPPR). Positions 239–248 (PPSPPPPVLR) are enriched in pro residues. Basic and acidic residues predominate over residues 364 to 380 (GRDDDVASRLADSDARP). Positions 403-417 (DSDESAASDEEDDEG) are enriched in acidic residues. Composition is skewed to basic and acidic residues over residues 418 to 437 (ARERDRIREERRRERQRELR) and 594 to 621 (EDAKRGIKRTSDQDADDARKKLRDEHDS).

Belongs to the SNW family. Associated with the spliceosome.

The protein resides in the nucleus. In terms of biological role, involved in pre-mRNA splicing. This Mycosarcoma maydis (Corn smut fungus) protein is Pre-mRNA-processing protein 45 (PRP45).